We begin with the raw amino-acid sequence, 726 residues long: Catalase-peroxidase (726 aa).

The tryptophyl-tyrosyl-methioninium (Trp-Tyr) (with M-250) cross-link spans 96 to 224; sequence WHSAGTYRIA…LAAVMMGLIY (129 aa). Histidine 97 serves as the catalytic Proton acceptor. A cross-link (tryptophyl-tyrosyl-methioninium (Tyr-Met) (with W-96)) is located at residues 224–250; the sequence is YVNPEGVDGKPDPLKTAHDMRVTFARM. Histidine 265 lines the heme b pocket.

This sequence belongs to the peroxidase family. Peroxidase/catalase subfamily. In terms of assembly, homodimer or homotetramer. Requires heme b as cofactor. Post-translationally, formation of the three residue Trp-Tyr-Met cross-link is important for the catalase, but not the peroxidase activity of the enzyme.

The catalysed reaction is H2O2 + AH2 = A + 2 H2O. It carries out the reaction 2 H2O2 = O2 + 2 H2O. In terms of biological role, bifunctional enzyme with both catalase and broad-spectrum peroxidase activity. The chain is Catalase-peroxidase from Vibrio campbellii (strain ATCC BAA-1116).